The chain runs to 268 residues: Interferon alpha/beta receptor 2 (268 aa).

The N-terminal stretch at 1-16 (MGPWTLLLLHLPLVVS) is a signal peptide. Over 17 to 223 (MLPAPTNVSI…TSPTAANTVP (207 aa)) the chain is Extracellular. Fibronectin type-III domains are found at residues 18–114 (LPAP…LTDT) and 115–217 (LLGP…TSPT). 2 disulfide bridges follow: C65–C74 and C191–C211. Residues 224–244 (VVLSVLCAFSLLVVLLCGIVV) form a helical membrane-spanning segment. Residues 245–268 (YSGRLLCMHKPLPKTLSSVPLCGG) lie on the Cytoplasmic side of the membrane.

It belongs to the type II cytokine receptor family. Heterodimer with IFNAR1; forming the receptor for type I interferon.

It localises to the cell membrane. Its subcellular location is the cytoplasm. Together with IFNAR1, forms the heterodimeric receptor for type I interferons (including interferons alpha, beta, epsilon, omega and kappa). Type I interferon binding activates the JAK-STAT signaling cascade, resulting in transcriptional activation or repression of interferon-regulated genes that encode the effectors of the interferon response. Mechanistically, type I interferon-binding brings the IFNAR1 and IFNAR2 subunits into close proximity with one another, driving their associated Janus kinases (JAKs) (TYK2 bound to IFNAR1 and JAK1 bound to IFNAR2) to cross-phosphorylate one another. The activated kinases phosphorylate specific tyrosine residues on the intracellular domains of IFNAR1 and IFNAR2, forming docking sites for the STAT transcription factors (STAT1, STAT2 and STAT). STAT proteins are then phosphorylated by the JAKs, promoting their translocation into the nucleus to regulate expression of interferon-regulated genes. This chain is Interferon alpha/beta receptor 2, found in Oncorhynchus mykiss (Rainbow trout).